A 75-amino-acid polypeptide reads, in one-letter code: Protein RALF-like 9 (75 aa).

A signal peptide spans 1-28 (MGMSKSIKVILSLALVVFLALAATKVEA). 2 disulfide bridges follow: Cys-46-Cys-54 and Cys-66-Cys-72.

This sequence belongs to the plant rapid alkalinization factor (RALF) family.

Its subcellular location is the secreted. Cell signaling peptide that may regulate plant stress, growth, and development. Mediates a rapid alkalinization of extracellular space by mediating a transient increase in the cytoplasmic Ca(2+) concentration leading to a calcium-dependent signaling events through a cell surface receptor and a concomitant activation of some intracellular mitogen-activated protein kinases. The polypeptide is Protein RALF-like 9 (RALFL9) (Arabidopsis thaliana (Mouse-ear cress)).